The chain runs to 567 residues: Potassium-transporting ATPase potassium-binding subunit (567 aa).

Helical transmembrane passes span 3–23 (MIGWLQIILFCVIIVALTKPL), 64–84 (LTYTVAMLLFHVGGFLVIYGV), 136–156 (GLTHQNFLSAATGIALAMALI), 179–199 (LYVLLPICVVYTLFLVWQGIP), 220–240 (VGPVASQVAIKMLGTNGGGFF), 254–274 (LSNFVQMLSIFALGAALTNVF), 285–305 (WAILAVMGVLFVAGVAVTYWA), 330–350 (FGLVASSLFAVITTAASCGAV), 374–394 (IIVGGVGAGLYGMLLFVVLAI), 420–440 (AMLAILVLPLMYLGWTAVGVV), 488–508 (LASAMFVGRFFMIVPAMAIAG), and 527–547 (GGLFVGLVVGVILIIGGLTFF).

It belongs to the KdpA family. The system is composed of three essential subunits: KdpA, KdpB and KdpC.

It localises to the cell inner membrane. Its function is as follows. Part of the high-affinity ATP-driven potassium transport (or Kdp) system, which catalyzes the hydrolysis of ATP coupled with the electrogenic transport of potassium into the cytoplasm. This subunit binds the periplasmic potassium ions and delivers the ions to the membrane domain of KdpB through an intramembrane tunnel. The polypeptide is Potassium-transporting ATPase potassium-binding subunit (Bradyrhizobium diazoefficiens (strain JCM 10833 / BCRC 13528 / IAM 13628 / NBRC 14792 / USDA 110)).